We begin with the raw amino-acid sequence, 1458 residues long: Secretory phospholipase A2 receptor (1458 aa).

The N-terminal stretch at 1–23 (MLLSLLLLLLLGAPRRCTEGAAA) is a signal peptide. At 24-1393 (ALSPERVLKW…EHPGKGPSHS (1370 aa)) the chain is on the extracellular side. 17 disulfides stabilise this stretch: Cys49–Cys62, Cys87–Cys104, Cys176–Cys202, Cys190–Cys217, Cys258–Cys352, Cys328–Cys344, Cys404–Cys499, Cys476–Cys491, Cys615–Cys632, Cys697–Cys794, Cys772–Cys786, Cys838–Cys935, Cys912–Cys927, Cys1065–Cys1085, Cys1207–Cys1221, Cys1278–Cys1373, and Cys1350–Cys1365. In terms of domain architecture, Ricin B-type lectin spans 49–113 (CIQAGKSVLT…CDSTHVSLRW (65 aa)). The N-linked (GlcNAc...) asparagine glycan is linked to Asn91. The region spanning 171 to 219 (AHGTPCMFPFQYNHQWHHECTREGRQDDSLWCATTSRYERDEKWGFCPD) is the Fibronectin type-II domain. 8 C-type lectin domains span residues 227 to 356 (CDAV…KKYL), 374 to 502 (TDCE…CKKP), 511 to 645 (SGCQ…KQPV), 660 to 798 (HPCY…KIPR), 815 to 939 (LFHQ…KRKT), 954 to 1098 (GTCP…EKIQ), 1117 to 1231 (LEYG…AICH), and 1243 to 1376 (ELCS…CKMK). N-linked (GlcNAc...) asparagine glycans are attached at residues Asn408, Asn431, and Asn452. A helical membrane pass occupies residues 1394 to 1416 (IVPLAVALTLVVILAIITLSFYI). Topologically, residues 1417 to 1458 (YKQNKGFFRRLAGVGNSYYPTTNFSTIHLEENILISDLEKND) are cytoplasmic. The Endocytosis signal motif lies at 1432 to 1438 (NSYYPTT).

Interacts with sPLA2-IB/PLA2G1B; this interaction mediates intracellular signaling as well as clearance of extracellular sPLA2-IB/PLA2G1B via endocytotic pathway. Interacts with sPLA2-X/PLA2G10; this interaction mediates sPLA2-X/PLA2G10 clearance and inactivation. Post-translationally, the secretory phospholipase A2 receptor form may be produced by the action of metalloproteinases. It contains all extracellular domains and only lacks transmembrane and cytosolic regions. It is however unclear whether this form is produced by proteolytic cleavage as suggested by some experiments, or by alternative splicing. In terms of tissue distribution, lung, skeletal muscle, brain, kidney and heart.

The protein localises to the cell membrane. Its subcellular location is the secreted. Its function is as follows. Receptor for secretory phospholipase A2 (sPLA2). Also able to bind to snake PA2-like toxins. Although its precise function remains unclear, binding of sPLA2 to its receptor participates in both positive and negative regulation of sPLA2 functions as well as clearance of sPLA2. Binding of sPLA2-IB/PLA2G1B induces various effects depending on the cell type, such as activation of the mitogen-activated protein kinase (MAPK) cascade to induce cell proliferation, the production of lipid mediators, selective release of arachidonic acid in bone marrow-derived mast cells. In neutrophils, binding of sPLA2-IB/PLA2G1B can activate p38 MAPK to stimulate elastase release and cell adhesion. May be involved in responses in pro-inflammatory cytokine productions during endotoxic shock. Also has endocytic properties and rapidly internalizes sPLA2 ligands, which is particularly important for the clearance of extracellular sPLA2s to protect their potent enzymatic activities. The soluble secretory phospholipase A2 receptor form is circulating and acts as a negative regulator of sPLA2 functions by blocking the biological functions of sPLA2-IB/PLA2G1B and sPLA2-X/PLA2G10. The sequence is that of Secretory phospholipase A2 receptor (PLA2R1) from Oryctolagus cuniculus (Rabbit).